Here is a 145-residue protein sequence, read N- to C-terminus: RNAP inhibitory protein (145 aa).

Residues 110–123 (HIKKLNLNSLAMLS) form a C-terminal tail, binds in the RNAP DNA-binding channel region.

The protein belongs to the viral ORF131/RIP family. In terms of assembly, interacts with host RNA polymerase (RNAP) subunits Rpo1N and Rpo2.

It localises to the virion. Functionally, plays a role in the inhibition of global transcription by interacting with the RNA polymerase (RNAP) clamp, locking it in a fixed position and inhibiting the formation and/or stability of the pre-initiation complex (PIC). Also overlaps with the transcription factor B binding site; overall RIP probably interferes with DNA loading onto RNAP but does not displace DNA once it is loaded. May play a role in virus particle assembly, possibly by dissociating active RNAP from the virus genome. The polypeptide is RNAP inhibitory protein (Acidianus two-tailed virus (ATV)).